A 207-amino-acid chain; its full sequence is Ribosomal RNA small subunit methyltransferase G (207 aa).

Residues G71, F76, 122–123 (AE), and R135 contribute to the S-adenosyl-L-methionine site.

Belongs to the methyltransferase superfamily. RNA methyltransferase RsmG family.

The protein resides in the cytoplasm. Its function is as follows. Specifically methylates the N7 position of a guanine in 16S rRNA. This chain is Ribosomal RNA small subunit methyltransferase G, found in Cytophaga hutchinsonii (strain ATCC 33406 / DSM 1761 / CIP 103989 / NBRC 15051 / NCIMB 9469 / D465).